A 466-amino-acid polypeptide reads, in one-letter code: Chromosomal replication initiator protein DnaA (466 aa).

The segment at 1 to 86 is domain I, interacts with DnaA modulators; it reads MSLSLWQQCL…EVGTKPVTQT (86 aa). Residues 86–129 form a domain II region; the sequence is TLKTPVHNVVAPTQTTTAQPQRVAPAARSGWDNVPAPAEPTYRS. The segment at 130-346 is domain III, AAA+ region; the sequence is NVNVKHTFDN…GALNRVIANA (217 aa). Residues G174, G176, K177, and T178 each coordinate ATP. Positions 347 to 466 are domain IV, binds dsDNA; the sequence is NFTGRAITID…FSNLIRTLSS (120 aa).

It belongs to the DnaA family. Oligomerizes as a right-handed, spiral filament on DNA at oriC.

It is found in the cytoplasm. Functionally, plays an essential role in the initiation and regulation of chromosomal replication. ATP-DnaA binds to the origin of replication (oriC) to initiate formation of the DNA replication initiation complex once per cell cycle. Binds the DnaA box (a 9 base pair repeat at the origin) and separates the double-stranded (ds)DNA. Forms a right-handed helical filament on oriC DNA; dsDNA binds to the exterior of the filament while single-stranded (ss)DNA is stabiized in the filament's interior. The ATP-DnaA-oriC complex binds and stabilizes one strand of the AT-rich DNA unwinding element (DUE), permitting loading of DNA polymerase. After initiation quickly degrades to an ADP-DnaA complex that is not apt for DNA replication. Binds acidic phospholipids. This is Chromosomal replication initiator protein DnaA from Salmonella choleraesuis (strain SC-B67).